A 493-amino-acid chain; its full sequence is Activin receptor type-1C (493 aa).

The N-terminal stretch at 1 to 25 is a signal peptide; the sequence is MTPARRSALSLALLLVALASDLAAG. Over 26–113 the chain is Extracellular; it reads LKCVCLLCDS…PDAPRLGPTE (88 aa). A helical membrane pass occupies residues 114–134; that stretch reads LTVVITVPVCLLSIAAMLTIW. The Cytoplasmic segment spans residues 135 to 493; sequence ACQDRQCTYR…QLCVKEDCKA (359 aa). A GS domain is found at 165-194; it reads KTLKDLIYDATASGSGSGPPLLVQRTIART. One can recognise a Protein kinase domain in the interval 195-485; the sequence is IVLQEIVGKG…LRVKKTISQL (291 aa). ATP is bound by residues 201–209 and Lys-222; that span reads VGKGRFGEV. Asp-323 serves as the catalytic Proton acceptor.

It belongs to the protein kinase superfamily. TKL Ser/Thr protein kinase family. TGFB receptor subfamily. In terms of assembly, binds the type 2 receptor protein ACVR2A. It depends on Mg(2+) as a cofactor. The cofactor is Mn(2+). Expressed in brain, kidney, lung, liver, testis, ovary, adrenal gland, heart, prostate, gastrointestinal tract, and spleen. Distributed throughout both adult and embryonic central nervous system and pancreatic islet cells.

The protein resides in the membrane. It catalyses the reaction L-threonyl-[receptor-protein] + ATP = O-phospho-L-threonyl-[receptor-protein] + ADP + H(+). The catalysed reaction is L-seryl-[receptor-protein] + ATP = O-phospho-L-seryl-[receptor-protein] + ADP + H(+). Serine/threonine protein kinase which forms a receptor complex on ligand binding. The receptor complex consists of 2 type II and 2 type I transmembrane serine/threonine kinases. Type II receptors phosphorylate and activate type I receptors which autophosphorylate, then bind and activate SMAD transcriptional regulators, SMAD2 and SMAD3. Receptor for activin AB, activin B, activin E and NODAL. Upon NODAL binding, activation results in increased apoptosis and reduced proliferation through suppression of AKT signaling and the activation of Smad2-dependent signaling pathway in pancreatic beta-cells, trophoblasts, epithelial or neuronal cells. Acts as a positive regulator for macrophage activation partially through down-regulation of PPARG expression. The protein is Activin receptor type-1C of Rattus norvegicus (Rat).